A 747-amino-acid chain; its full sequence is Cysteine--tRNA ligase, cytoplasmic (747 aa).

The tract at residues 1–26 (MTESWEQGKGRRTQPPWSAPNTNEQP) is disordered. Polar residues predominate over residues 15–25 (PPWSAPNTNEQ). C54 lines the Zn(2+) pocket. An L-cysteine-binding site is contributed by G55. The 'HIGH' region signature appears at 56–66 (PTVYDASHMGH). T95 is an L-cysteine binding site. The 'KIIK' region motif lies at 100–103 (KIIK). Residues C347, H372, and E376 each coordinate Zn(2+). Position 372 (H372) interacts with L-cysteine. A 'KMSKS' region motif is present at residues 405–409 (KMSKS). K408 serves as a coordination point for ATP. Basic and acidic residues predominate over residues 651–683 (EEKRKAEEEKQRKKEEAARKKQQQEAAKLEKMK). 2 disordered regions span residues 651 to 685 (EEKR…MKIS) and 700 to 721 (FDES…GQTK).

It belongs to the class-I aminoacyl-tRNA synthetase family. As to quaternary structure, homodimer. It depends on Zn(2+) as a cofactor.

The protein resides in the cytoplasm. It carries out the reaction tRNA(Cys) + L-cysteine + ATP = L-cysteinyl-tRNA(Cys) + AMP + diphosphate. In terms of biological role, catalyzes the ATP-dependent ligation of cysteine to tRNA(Cys). The protein is Cysteine--tRNA ligase, cytoplasmic (cars1) of Xenopus laevis (African clawed frog).